A 58-amino-acid polypeptide reads, in one-letter code: Small ribosomal subunit protein bS21 (58 aa).

The tract at residues 39 to 58 (DKPSVKKRAKSKAAAKYRSR) is disordered. Positions 43–58 (VKKRAKSKAAAKYRSR) are enriched in basic residues.

It belongs to the bacterial ribosomal protein bS21 family.

This Chlamydia abortus (strain DSM 27085 / S26/3) (Chlamydophila abortus) protein is Small ribosomal subunit protein bS21.